We begin with the raw amino-acid sequence, 473 residues long: O-methyltransferase aclU (473 aa).

Residues Asp-320 and 354–356 each bind S-adenosyl-L-methionine; that span reads GDF. The active-site Proton acceptor is the His-373.

Belongs to the class I-like SAM-binding methyltransferase superfamily. Cation-independent O-methyltransferase family. COMT subfamily.

It participates in mycotoxin biosynthesis. In terms of biological role, O-methyltransferase; part of the gene cluster that mediates the biosynthesis of aspirochlorine (or antibiotic A30641), an unusual halogenated spiro compound with distinctive antifungal properties due to selective inhibition of protein biosynthesis, and which is also active against bacteria, viruses, and murine tumor cells. The non-ribosomal peptide synthetase (NRPS) aclP is responsible the formation of the diketopiperazine (DKP) core from the condensation of 2 phenylalanine residues. One Phe residue is tailored into chlorotyrosine by hydroxylation and chlorination, whereas the second Phe undergoes an unprecedented C-C bond cleavage to be converted into glycine. After formation of the DKP, sulfur is incorporated into the DKP by conjugation with glutathione by aclG, followed by its stepwise degradation to the thiol by aclI, aclJ and aclK, and the dithiol oxidation by aclT. In addition, oxygenases (aclB, aclC, aclL and aclO) and O-methyltransferases (aclM and aclU) act as tailoring enzymes to produce the intermediate dechloroaspirochlorine. Ultimately, chlorination of dechloroaspirochlorine by the halogenase aclH is the last step in the aspirochlorine pathway. This Aspergillus oryzae (strain ATCC 42149 / RIB 40) (Yellow koji mold) protein is O-methyltransferase aclU.